The chain runs to 292 residues: 4-hydroxy-tetrahydrodipicolinate synthase (292 aa).

Thr45 is a pyruvate binding site. Residue Tyr133 is the Proton donor/acceptor of the active site. Lys161 acts as the Schiff-base intermediate with substrate in catalysis. Ile203 provides a ligand contact to pyruvate.

It belongs to the DapA family. As to quaternary structure, homotetramer; dimer of dimers.

It is found in the cytoplasm. It catalyses the reaction L-aspartate 4-semialdehyde + pyruvate = (2S,4S)-4-hydroxy-2,3,4,5-tetrahydrodipicolinate + H2O + H(+). It participates in amino-acid biosynthesis; L-lysine biosynthesis via DAP pathway; (S)-tetrahydrodipicolinate from L-aspartate: step 3/4. Its function is as follows. Catalyzes the condensation of (S)-aspartate-beta-semialdehyde [(S)-ASA] and pyruvate to 4-hydroxy-tetrahydrodipicolinate (HTPA). The sequence is that of 4-hydroxy-tetrahydrodipicolinate synthase from Cronobacter sakazakii (strain ATCC BAA-894) (Enterobacter sakazakii).